The chain runs to 634 residues: Phototropic-responsive NPH3 family protein NPY2 (634 aa).

A BTB domain is found at 29 to 97; it reads SDISVDVEGS…CYGMTVTLSA (69 aa). One can recognise an NPH3 domain in the interval 207 to 488; that stretch reads DWWVEDLCEL…VQVLFFEQVR (282 aa). Residue Y429 is modified to Phosphotyrosine. Disordered regions lie at residues 492-517 and 584-634; these read SSGSSTPDLPRGMGRELRSCGTYGSS and QLQS…VSVS. Positions 588–602 are enriched in gly residues; the sequence is KGGGEKNNGGGGGGS. The span at 619–634 shows a compositional bias: polar residues; sequence KTATPSRNLTRRVSVS.

The protein belongs to the NPH3 family. In terms of tissue distribution, specifically expressed in the hypophysis and the root meristems in the embryos. Highly expressed in primary root tips and radicles.

The protein resides in the cell membrane. The protein localises to the cytoplasm. Its subcellular location is the cytosol. The protein operates within protein modification; protein ubiquitination. In terms of biological role, may act as a substrate-specific adapter of an E3 ubiquitin-protein ligase complex (CUL3-RBX1-BTB) which mediates the ubiquitination and subsequent proteasomal degradation of target proteins. Plays an essential role in auxin-mediated organogenesis and in root gravitropic responses through the control of PIN proteins (e.g. PIN1 and PIN2) polarity in the root tip endodermal cell layer and in shoot epidermis. Recruited to the plasma membrane by PINs (e.g. PIN1 and PIN2) and, in concert with AGC kinases-mediated (e.g. D6PK and PID) PINs phosphorylation, maintains their polarity through limiting lateral diffusion-based escape. This is Phototropic-responsive NPH3 family protein NPY2 from Arabidopsis thaliana (Mouse-ear cress).